A 143-amino-acid chain; its full sequence is Large ribosomal subunit protein uL15 (143 aa).

Basic residues-rich tracts occupy residues 1–14 (MIRK…KRGS) and 23–38 (KKHR…GNAG). Positions 1–38 (MIRKSKKITKKRGSRTCGYGEAKKHRGAGHRGGRGNAG) are disordered.

The protein belongs to the universal ribosomal protein uL15 family. As to quaternary structure, part of the 50S ribosomal subunit.

In terms of biological role, binds to the 23S rRNA. The sequence is that of Large ribosomal subunit protein uL15 from Methanococcus maripaludis (strain DSM 14266 / JCM 13030 / NBRC 101832 / S2 / LL).